Here is a 388-residue protein sequence, read N- to C-terminus: F-box/kelch-repeat protein At3g17530 (388 aa).

The region spanning 1-50 (MMISDLPHDLESEILSRVPAKSLAKWKTTCKRWYALFRDPSFVKKNFDKA) is the F-box domain. Kelch repeat units follow at residues 163 to 208 (CCYY…VSLK) and 336 to 383 (RIYI…AEEN).

The sequence is that of F-box/kelch-repeat protein At3g17530 from Arabidopsis thaliana (Mouse-ear cress).